Reading from the N-terminus, the 272-residue chain is 3-methyl-2-oxobutanoate hydroxymethyltransferase (272 aa).

Residues D43 and D82 each coordinate Mg(2+). 3-methyl-2-oxobutanoate-binding positions include 43-44 (DS), D82, and K112. Mg(2+) is bound at residue E114. The active-site Proton acceptor is E179.

This sequence belongs to the PanB family. As to quaternary structure, homodecamer; pentamer of dimers. Mg(2+) is required as a cofactor.

It localises to the cytoplasm. The enzyme catalyses 3-methyl-2-oxobutanoate + (6R)-5,10-methylene-5,6,7,8-tetrahydrofolate + H2O = 2-dehydropantoate + (6S)-5,6,7,8-tetrahydrofolate. The protein operates within cofactor biosynthesis; (R)-pantothenate biosynthesis; (R)-pantoate from 3-methyl-2-oxobutanoate: step 1/2. In terms of biological role, catalyzes the reversible reaction in which hydroxymethyl group from 5,10-methylenetetrahydrofolate is transferred onto alpha-ketoisovalerate to form ketopantoate. This Staphylococcus epidermidis (strain ATCC 35984 / DSM 28319 / BCRC 17069 / CCUG 31568 / BM 3577 / RP62A) protein is 3-methyl-2-oxobutanoate hydroxymethyltransferase.